The primary structure comprises 252 residues: ATP-dependent L-serine kinase (252 aa).

The active site involves Glu35. Residue Val73 participates in O-phospho-L-serine binding. Asp74 contributes to the Mg(2+) binding site. 7 residues coordinate O-phospho-L-serine: Gly75, His76, His77, Trp107, Lys231, Thr233, and His235.

This sequence belongs to the SerK family. In terms of assembly, monomer. It depends on Mg(2+) as a cofactor.

The catalysed reaction is L-serine + ATP = O-phospho-L-serine + ADP + H(+). Free serine kinase that uses ATP to phosphorylate L-serine to yield O-phospho-L-serine and ADP. Can use ATP, UTP, CTP, GTP and the inorganic polyphosphates triphosphate and tetraphosphate as phosphate donors, with a preference for nucleoside 5'-triphosphates, but cannot use ADP. The catalytic efficiency is highest for ATP. Is specific for L-serine and cannot phosphorylate structurally similar compounds such as D-serine, L-threonine, L-homoserine, hydroxypyruvate, 3-hydroxypropionate and DL-glycerate. Likely contributes to serine metabolism, including cysteine biosynthesis. The polypeptide is ATP-dependent L-serine kinase (Staphylothermus marinus (strain ATCC 43588 / DSM 3639 / JCM 9404 / F1)).